Reading from the N-terminus, the 538-residue chain is Phospho-2-dehydro-3-deoxyheptonate aldolase 1, chloroplastic (538 aa).

A chloroplast-targeting transit peptide spans 1–74; sequence MALSSTSTTN…KPSKSSPPAA (74 aa). Residues 55–82 are disordered; sequence DSNKIPIVSDKPSKSSPPAATATTAPAP. Over residues 68 to 82 the composition is skewed to low complexity; the sequence is KSSPPAATATTAPAP. At threonine 75 the chain carries Blocked amino end (Thr).

The protein belongs to the class-II DAHP synthase family.

Its subcellular location is the plastid. The protein localises to the chloroplast. The enzyme catalyses D-erythrose 4-phosphate + phosphoenolpyruvate + H2O = 7-phospho-2-dehydro-3-deoxy-D-arabino-heptonate + phosphate. The protein operates within metabolic intermediate biosynthesis; chorismate biosynthesis; chorismate from D-erythrose 4-phosphate and phosphoenolpyruvate: step 1/7. Activation by tryptophan (a hysteretic factor). The sequence is that of Phospho-2-dehydro-3-deoxyheptonate aldolase 1, chloroplastic (SHKA) from Solanum tuberosum (Potato).